Here is a 98-residue protein sequence, read N- to C-terminus: Homeobox protein SMOX-4 (98 aa).

The homeobox DNA-binding region spans 37-96 (SFRNRTAFTDYQLICLEREFSHIQYLSRIDRIHLAQNLNLTEKQVKIWFQNRRVRWRKRN).

It is found in the nucleus. In Schistosoma mansoni (Blood fluke), this protein is Homeobox protein SMOX-4 (SMOX-4).